The chain runs to 880 residues: MKELSSAQIRQMYLDFFKSKGHDVMKSAPLIPHDDPTLLWINSGVATMKKYFDGSVVPKNHRITSSQKSIRTNDIENVGHTARHHTLFEMLGNFSVGDYFKKEAITWAWELLTSPEWFDMDKEKLYITVYPEDKDAKKYWEEVGVDPSHIYEAEDNFWDIGEGPSGPDSEIFFDRGQEMNNLPEDDPESYPGGENERYLEIWNIVFSEFNHKPDGTYEPLPHKNIDTGMGLERVVSVFQHARTNFETDLFLPIIEKTAELSAGKKYGENAEADVSFKVIADHARAVTFAIGDGALPSNEGRGYVIRRLIRRAVMHGQKLGIDEAFLYKLVPVVGKIMESAYPEVLEQAEFIEKVIKMEEDRFNDTLKDGMQLLDSLIAETKENGGKELPGKPVFKLYDTYGFPLELTKEYANDEGLDVDEEGFNEEMEQQKARARAARSDAKSMGVQNGLLTDITTSSEYVGYHELKANGVLKDIIIDNELVDTVPADSRAQVIFDKTPFYAEMGGQVADKGVIKNQAGEVVAEVEDVQHAPNGQNMHTIHALKEMTRENTYSLEVDVAFHNKVKKNHTATHLLDQALRDVLGSHTHQAGSLVEPTYLRFDFTNLGSVTAEDLKKIEDIVNAKIWENIQVETVVTDKESAEKMGAIALFGDKYGDTVRVVKVGDYSMEFCGGTHVANTNEIGLFKIVSESGVGAGVRRIEAVTSEEAFEFLEERNQLLRQSADELKIVQIKEVPRKIEQLQEQVKLLEQQKQALEDKFASQQAGDIFKNIKDINGKTLIAGQVNVSGMSQLRQLADQWKEKQLSDVLVLATATADGKVNLITAISSDAVKEGYKAGDLIKAIAPKVGGGGGGRPDLAQAGGKKPEGIQEALKAAEDWLNK.

4 residues coordinate Zn(2+): His-568, His-572, Cys-670, and His-674.

Belongs to the class-II aminoacyl-tRNA synthetase family. It depends on Zn(2+) as a cofactor.

The protein localises to the cytoplasm. It catalyses the reaction tRNA(Ala) + L-alanine + ATP = L-alanyl-tRNA(Ala) + AMP + diphosphate. Functionally, catalyzes the attachment of alanine to tRNA(Ala) in a two-step reaction: alanine is first activated by ATP to form Ala-AMP and then transferred to the acceptor end of tRNA(Ala). Also edits incorrectly charged Ser-tRNA(Ala) and Gly-tRNA(Ala) via its editing domain. The protein is Alanine--tRNA ligase of Ligilactobacillus salivarius (strain UCC118) (Lactobacillus salivarius).